A 235-amino-acid polypeptide reads, in one-letter code: Carboxy-S-adenosyl-L-methionine synthase (235 aa).

Residues Tyr35, 60–62 (GCS), 84–85 (DN), 110–111 (DI), Asn125, and Arg192 each bind S-adenosyl-L-methionine.

This sequence belongs to the class I-like SAM-binding methyltransferase superfamily. Cx-SAM synthase family. As to quaternary structure, homodimer.

The enzyme catalyses prephenate + S-adenosyl-L-methionine = carboxy-S-adenosyl-L-methionine + 3-phenylpyruvate + H2O. In terms of biological role, catalyzes the conversion of S-adenosyl-L-methionine (SAM) to carboxy-S-adenosyl-L-methionine (Cx-SAM). This Sulfurimonas denitrificans (strain ATCC 33889 / DSM 1251) (Thiomicrospira denitrificans (strain ATCC 33889 / DSM 1251)) protein is Carboxy-S-adenosyl-L-methionine synthase.